The primary structure comprises 128 residues: Holo-[acyl-carrier-protein] synthase (128 aa).

Mg(2+)-binding residues include D8 and E59.

Belongs to the P-Pant transferase superfamily. AcpS family. Requires Mg(2+) as cofactor.

It localises to the cytoplasm. The catalysed reaction is apo-[ACP] + CoA = holo-[ACP] + adenosine 3',5'-bisphosphate + H(+). Transfers the 4'-phosphopantetheine moiety from coenzyme A to a Ser of acyl-carrier-protein. The protein is Holo-[acyl-carrier-protein] synthase of Rickettsia typhi (strain ATCC VR-144 / Wilmington).